Here is a 280-residue protein sequence, read N- to C-terminus: Vacuolar protein sorting-associated protein 71 (280 aa).

The span at 64–73 (RSEGDGNSIS) shows a compositional bias: polar residues. The segment at 64 to 92 (RSEGDGNSISRQDDRNSKNSHSFEERYTQ) is disordered. Residues 74–92 (RQDDRNSKNSHSFEERYTQ) show a composition bias toward basic and acidic residues. Zn(2+)-binding residues include Cys244, Cys247, Cys256, Cys259, Cys264, Cys268, His272, and Cys277. The HIT-type zinc-finger motif lies at 244–277 (CSICGGYDSISSCVNCGNKICSVSCFKLHNETRC).

In terms of assembly, belongs to the SWR1 complex at least composed of ACT1, ARP4, RVB1, RVB2, ARP6, YAF9, VPS71, VPS72, SWC3, SWC4, SWC5, SWR1 and HTZ1.

The protein localises to the nucleus. Its function is as follows. Participates in the catalytic exchange of histone H2A for the H2A variant HZT1, an euchromatin-specific factor, leading to chromatin remodeling and changes in transcription of targeted genes. Indirectly involved in vacuolar protein sorting. This chain is Vacuolar protein sorting-associated protein 71 (VPS71), found in Saccharomyces cerevisiae (strain ATCC 204508 / S288c) (Baker's yeast).